Consider the following 547-residue polypeptide: Nitrate transporter 2.1 (547 aa).

The next 12 membrane-spanning stretches (helical) occupy residues 53–73 (WICF…APII), 86–106 (NAGV…GIVV), 113–133 (YGAA…ALVT), 143–163 (FFIG…GTMF), 173–193 (AIAA…MPLI), 211–231 (AFFV…LLGI), 262–280 (LGNY…SFGV), 296–316 (FGLN…MNLF), 338–358 (IWAL…LGKV), 366–386 (IVIM…HFGI), 400–420 (GLVG…WFAG), and 433–453 (GFVY…FIWF).

Belongs to the major facilitator superfamily. Nitrate/nitrite porter (TC 2.A.1.8) family.

The protein resides in the cell membrane. Its activity is regulated as follows. Nitrite transport mediated by system 1 is very sensitive to inhibition by nitrate. Its function is as follows. Involved in nitrate transport, but does not seem to be able to mediate transport by its own. Acts as a dual component transporter with NAR2 (system 1). Imports nitrate with high affinity when expressed with NAR2 in a heterologous system (Xenopus oocytes). Involved in a high affinity and a high capacity transport specific for both nitrate and nitrite. This Chlamydomonas reinhardtii (Chlamydomonas smithii) protein is Nitrate transporter 2.1.